We begin with the raw amino-acid sequence, 427 residues long: MSNNQILFERAQKTIPGGVNSPVRAFRSVGGTPRFVARAQGPYFWDADGKQYIDYIGSWGPMIVGHVHPEVLSAVQNVLADGFSFGAPTEAEIEIAEEICKLVPSIEQVRMVSSGTEATMSALRLARGFTGRSRIVKFEGCYHGHADSLLVKAGSGLLTFGNPTSAGVPADIAKHTTVLEYNNVAALEEAFGAFGDEIAAVIVEPVAGNMNLVRGTPEFLNALRALCMKHGAVLIFDEVMCGFRVALGGAQAYYGIAADLTCLGKVIGGGMPAAAFGGRRDIMAHLAPLGGVYQAGTLSGNPIAVAAGLKTLQLIQAPGFYDALTAQTKRLADGLAAEARAAGVPFAADSIGAMFGLYFAERVPGSFAEVTKSDVERFNRFFHLMLDEGVYFAPSAYEAGFVSSTHDDAVIDATLAAARRAFAALAA.

K265 is subject to N6-(pyridoxal phosphate)lysine.

The protein belongs to the class-III pyridoxal-phosphate-dependent aminotransferase family. HemL subfamily. Homodimer. It depends on pyridoxal 5'-phosphate as a cofactor.

Its subcellular location is the cytoplasm. It carries out the reaction (S)-4-amino-5-oxopentanoate = 5-aminolevulinate. It participates in porphyrin-containing compound metabolism; protoporphyrin-IX biosynthesis; 5-aminolevulinate from L-glutamyl-tRNA(Glu): step 2/2. In Burkholderia orbicola (strain MC0-3), this protein is Glutamate-1-semialdehyde 2,1-aminomutase.